Reading from the N-terminus, the 397-residue chain is MLSQLIERSTQYVREASLEEQNRIMPLIDFGPYVNQEPGAHERIIQQLRAACESTGFFQIVNSPISPDVVKNAFRASKQFFELPFDEKLTLSKDMFSNRGYELMEDFVLEGEEDSSSPLEISGIDFEAGSYPGEAPLPPSSIGYVLPPSSLANGEGSSMFDADMTTSNAVAHGDESISNEFRESFYFGNDNLSKDRLLRPFQGPNKWPSTAGSSFRKALVKYHDQMLAFANHVMSLLAESLELSPDAFDEFCSDPTTSIRLLRYPSSPNRLGVQEHTDADALTLMSQDNVKGLEILDPVSNCFLSVSPAPGALIANLGDIMAILTNNRYKSSMHRVCNNSGSDRYTIPFFLQGNIDYVVAPLPGLGPSTAEPIAVEDLLRDHFQNSYTSHTTSLEVA.

The region spanning 255–353 (PTTSIRLLRY…RYTIPFFLQG (99 aa)) is the Fe2OG dioxygenase domain.

The protein belongs to the iron/ascorbate-dependent oxidoreductase family.

In Schizosaccharomyces pombe (strain 972 / ATCC 24843) (Fission yeast), this protein is Sexual differentiation process protein isp7 (isp7).